The primary structure comprises 390 residues: Neutrophil cytosol factor 1 (390 aa).

In terms of domain architecture, PX spans Thr4–Leu125. SH3 domains lie at Ile156–Ser215 and Tyr226–Gln285. Residues Gln285–Val390 are disordered. Phosphoserine is present on residues Ser303 and Ser304. Positions His309–Arg318 are enriched in basic residues. Residues Ser320, Ser328, Ser345, and Ser348 each carry the phosphoserine modification.

Component of the phagocyte NADPH oxidase complex composed of an obligatory core heterodimer formed by the membrane proteins CYBA and CYBB and the cytosolic regulatory subunits NCF1/p47-phox, NCF2/p67-phox, NCF4/p40-phox and the small GTPase RAC1 or RAC2. Part of a cytosolic complex composed at least by NCF1, NCF2 and NCF4. Interacts (via C-terminus) with NCF2 (via the C-terminal SH3 domain). Interacts with NCF4. Interacts with CYBB. Interacts (via the second SH3 domain) with CYBA; interaction is phosphorylation-dependent. Interacts with NOXA1. Interacts with ADAM15. Interacts with TRAF4. Interacts with FASLG. Interacts with PARK7 (via C-terminus); the interaction is enhanced by LPS and modulates NCF1 phosphorylation and membrane translocation. In terms of processing, phosphorylated by PRKCD; phosphorylation induces activation of NCF1, leading to assembly and activation of the NADPH oxidase complex. Detected in peripheral blood monocytes and neutrophils (at protein level).

Its subcellular location is the cytoplasm. It localises to the cytosol. It is found in the membrane. Functionally, subunit of the phagocyte NADPH oxidase complex that mediates the transfer of electrons from cytosolic NADPH to O2 to produce the superoxide anion (O2(-)). In the activated complex, electrons are first transferred from NADPH to flavin adenine dinucleotide (FAD) and subsequently transferred via two heme molecules to molecular oxygen, producing superoxide through an outer-sphere reaction. Activation of the NADPH oxidase complex is initiated by the assembly of cytosolic subunits of the NADPH oxidase complex with the core NADPH oxidase complex to form a complex at the plasma membrane or phagosomal membrane. This activation process is initiated by phosphorylation dependent binding of the cytosolic NCF1/p47-phox subunit to the C-terminus of CYBA/p22-phox. In Homo sapiens (Human), this protein is Neutrophil cytosol factor 1.